Consider the following 239-residue polypeptide: Norbelladine 4'-O-methyltransferase 4 (239 aa).

S-adenosyl-L-methionine-binding positions include Val-55, Glu-77, 79–80 (GV), Ser-85, Asp-103, and Ala-132. A divalent metal cation is bound at residue Asp-155. Residue Asp-157 participates in S-adenosyl-L-methionine binding. Residues Asp-181 and Asn-182 each contribute to the a divalent metal cation site.

This sequence belongs to the class I-like SAM-binding methyltransferase superfamily. Cation-dependent O-methyltransferase family. Requires Mg(2+) as cofactor.

It carries out the reaction norbelladine + S-adenosyl-L-methionine = 4'-O-methylnorbelladine + S-adenosyl-L-homocysteine + H(+). Its pathway is alkaloid biosynthesis. 4'-O-methyltransferase converting norbelladine to 4'-O-methylnorbelladine. 4'-O-methylnorbelladine is a precursor to all Amaryllidaceae alkaloids such as galanthamine, lycorine and haemanthamine, and including haemanthamine- and crinamine-type alkaloids, promising anticancer agents. The polypeptide is Norbelladine 4'-O-methyltransferase 4 (Narcissus aff. pseudonarcissus MK-2014 (Daffodil)).